The following is a 443-amino-acid chain: Chromosome partition protein MukF (443 aa).

The tract at residues 209-237 (LDETSGNLRELQDVLNASGDKLQSQLLRI) is leucine-zipper.

This sequence belongs to the MukF family. As to quaternary structure, interacts, and probably forms a ternary complex, with MukE and MukB via its C-terminal region. The complex formation is stimulated by calcium or magnesium. It is required for an interaction between MukE and MukB.

It is found in the cytoplasm. The protein resides in the nucleoid. Its function is as follows. Involved in chromosome condensation, segregation and cell cycle progression. May participate in facilitating chromosome segregation by condensation DNA from both sides of a centrally located replisome during cell division. Not required for mini-F plasmid partitioning. Probably acts via its interaction with MukB and MukE. Overexpression results in anucleate cells. It has a calcium binding activity. In Glaesserella parasuis serovar 5 (strain SH0165) (Haemophilus parasuis), this protein is Chromosome partition protein MukF.